The following is a 191-amino-acid chain: Small ribosomal subunit protein eS7 (191 aa).

Belongs to the eukaryotic ribosomal protein eS7 family.

The protein is Small ribosomal subunit protein eS7 (RPS7) of Hordeum vulgare (Barley).